The following is a 436-amino-acid chain: GTPase Der (436 aa).

EngA-type G domains are found at residues 4–167 and 176–351; these read SVVA…PNES and IYFS…ESHT. GTP is bound by residues 10–17, 57–61, 119–122, 182–189, 229–233, and 294–297; these read GRPNVGKS, DTGGI, NKMD, DTAGM, and NKWD. Residues 352-436 enclose the KH-like domain; the sequence is KRIPTNVLND…PIKLFARRRQ (85 aa).

It belongs to the TRAFAC class TrmE-Era-EngA-EngB-Septin-like GTPase superfamily. EngA (Der) GTPase family. In terms of assembly, associates with the 50S ribosomal subunit.

Its function is as follows. GTPase that plays an essential role in the late steps of ribosome biogenesis. In Oceanobacillus iheyensis (strain DSM 14371 / CIP 107618 / JCM 11309 / KCTC 3954 / HTE831), this protein is GTPase Der.